Consider the following 100-residue polypeptide: uncharacterized protein (100 aa).

This is an uncharacterized protein from Archaeoglobus fulgidus (strain ATCC 49558 / DSM 4304 / JCM 9628 / NBRC 100126 / VC-16).